The following is a 423-amino-acid chain: COP9 signalosome complex subunit 3 (423 aa).

An N-acetylalanine modification is found at Ala2. The region spanning 197–365 is the PCI domain; sequence NFERALYFYE…GMVSFHDNPE (169 aa). The tract at residues 402–423 is disordered; sequence QFVQKSMGSQEDDSGNKPSSYS. A phosphoserine mark is found at Ser407, Ser410, and Ser423.

This sequence belongs to the CSN3 family. In terms of assembly, component of the CSN complex, composed of COPS1/GPS1, COPS2, COPS3, COPS4, COPS5, COPS6, COPS7 (COPS7A or COPS7B), COPS8 and COPS9. In the complex, it probably interacts directly with COPS1, COPS4, COPS8 and COPS9. Interacts with CK2 and PKD. Interacts with the translation initiation factor EIF3S6 and IKBKG. Interacts with ERCC6.

It localises to the cytoplasm. The protein localises to the nucleus. In terms of biological role, component of the COP9 signalosome complex (CSN), a complex involved in various cellular and developmental processes. The CSN complex is an essential regulator of the ubiquitin (Ubl) conjugation pathway by mediating the deneddylation of the cullin subunits of SCF-type E3 ligase complexes, leading to decrease the Ubl ligase activity of SCF-type complexes such as SCF, CSA or DDB2. The complex is also involved in phosphorylation of p53/TP53, c-jun/JUN, IkappaBalpha/NFKBIA, ITPK1 and IRF8/ICSBP, possibly via its association with CK2 and PKD kinases. CSN-dependent phosphorylation of TP53 and JUN promotes and protects degradation by the Ubl system, respectively. Essential to maintain the survival of epiblast cells and thus the development of the postimplantation embryo. This chain is COP9 signalosome complex subunit 3 (Cops3), found in Rattus norvegicus (Rat).